Consider the following 259-residue polypeptide: Haloacid dehalogenase-like hydrolase domain-containing protein 2 (259 aa).

Aspartate 13 and serine 15 together coordinate Mg(2+). Substrate contacts are provided by residues 13–15 and 46–47; these read DLS and TN. Residues 49 to 71 are a coiled coil; it reads TKESKRDLLERLRKLEFDISEEE. An N6-succinyllysine modification is found at lysine 50. Lysine 179 contacts substrate. Aspartate 204 is a binding site for Mg(2+).

The protein belongs to the HAD-like hydrolase superfamily. Mg(2+) serves as cofactor.

In Rattus norvegicus (Rat), this protein is Haloacid dehalogenase-like hydrolase domain-containing protein 2 (Hdhd2).